The sequence spans 78 residues: MSRVCQLTGTKANNGMAVSHSHIRTKKLQQANLQQRRLWWAEGKRWVNLRITTRALKTIQKKGLGAYAKSLGIDLARL.

This sequence belongs to the bacterial ribosomal protein bL28 family.

This chain is Large ribosomal subunit protein bL28, found in Synechococcus sp. (strain WH7803).